Consider the following 669-residue polypeptide: DNA ligase (669 aa).

NAD(+) is bound at residue aspartate 35–aspartate 39. The tract at residues tyrosine 52–glutamate 71 is disordered. A compositionally biased stretch (basic and acidic residues) spans proline 61–glutamate 71. Residues serine 84–leucine 85 and glutamate 115 contribute to the NAD(+) site. Residue lysine 117 is the N6-AMP-lysine intermediate of the active site. NAD(+) is bound by residues arginine 138, glutamate 175, lysine 290, and lysine 314. Residues cysteine 408, cysteine 411, cysteine 426, and cysteine 432 each contribute to the Zn(2+) site. Residues proline 590–glutamate 669 form the BRCT domain.

This sequence belongs to the NAD-dependent DNA ligase family. LigA subfamily. It depends on Mg(2+) as a cofactor. Mn(2+) serves as cofactor.

It catalyses the reaction NAD(+) + (deoxyribonucleotide)n-3'-hydroxyl + 5'-phospho-(deoxyribonucleotide)m = (deoxyribonucleotide)n+m + AMP + beta-nicotinamide D-nucleotide.. DNA ligase that catalyzes the formation of phosphodiester linkages between 5'-phosphoryl and 3'-hydroxyl groups in double-stranded DNA using NAD as a coenzyme and as the energy source for the reaction. It is essential for DNA replication and repair of damaged DNA. The chain is DNA ligase from Porphyromonas gingivalis (strain ATCC 33277 / DSM 20709 / CIP 103683 / JCM 12257 / NCTC 11834 / 2561).